Consider the following 288-residue polypeptide: Bifunctional protein FolD (288 aa).

NADP(+) is bound by residues 166–168 (GAS) and Ile232.

It belongs to the tetrahydrofolate dehydrogenase/cyclohydrolase family. Homodimer.

The catalysed reaction is (6R)-5,10-methylene-5,6,7,8-tetrahydrofolate + NADP(+) = (6R)-5,10-methenyltetrahydrofolate + NADPH. It carries out the reaction (6R)-5,10-methenyltetrahydrofolate + H2O = (6R)-10-formyltetrahydrofolate + H(+). It participates in one-carbon metabolism; tetrahydrofolate interconversion. Functionally, catalyzes the oxidation of 5,10-methylenetetrahydrofolate to 5,10-methenyltetrahydrofolate and then the hydrolysis of 5,10-methenyltetrahydrofolate to 10-formyltetrahydrofolate. The polypeptide is Bifunctional protein FolD (Cronobacter sakazakii (strain ATCC BAA-894) (Enterobacter sakazakii)).